We begin with the raw amino-acid sequence, 349 residues long: N-acetyl-gamma-glutamyl-phosphate reductase (349 aa).

Cys-149 is a catalytic residue.

It belongs to the NAGSA dehydrogenase family. Type 1 subfamily.

It localises to the cytoplasm. It carries out the reaction N-acetyl-L-glutamate 5-semialdehyde + phosphate + NADP(+) = N-acetyl-L-glutamyl 5-phosphate + NADPH + H(+). It participates in amino-acid biosynthesis; L-arginine biosynthesis; N(2)-acetyl-L-ornithine from L-glutamate: step 3/4. Catalyzes the NADPH-dependent reduction of N-acetyl-5-glutamyl phosphate to yield N-acetyl-L-glutamate 5-semialdehyde. The protein is N-acetyl-gamma-glutamyl-phosphate reductase of Acinetobacter baylyi (strain ATCC 33305 / BD413 / ADP1).